Consider the following 494-residue polypeptide: UDP-glucose 6-dehydrogenase (494 aa).

NAD(+)-binding positions include 11–16 (GAGYVG), aspartate 36, arginine 41, 89–93 (VNTPT), and 130–132 (STV). The interval 88–110 (SVNTPTKTYGMGKGRAADLKYIE) is disordered. An allosteric switch region region spans residues 129 to 135 (KSTVPVR). Catalysis depends on glutamate 161, which acts as the Proton donor/acceptor. Substrate is bound by residues 161-165 (EFLAE), 220-224 (KLAAN), arginine 260, and 267-273 (KASVGFG). Glutamate 165 is an NAD(+) binding site. The Proton donor/acceptor role is filled by lysine 220. Cysteine 276 serves as the catalytic Nucleophile. 276–279 (CFQK) contributes to the NAD(+) binding site. Residues 321–325 (SLFNT) form an important for formation of active hexamer structure region. 338-339 (FK) contributes to the substrate binding site. Arginine 346 contacts NAD(+). Arginine 442 lines the substrate pocket. The segment at 466 to 494 (VSAKRIPFASSCEIPKFSLQDPPVKKPRV) is disordered.

This sequence belongs to the UDP-glucose/GDP-mannose dehydrogenase family. As to quaternary structure, homohexamer.

It carries out the reaction UDP-alpha-D-glucose + 2 NAD(+) + H2O = UDP-alpha-D-glucuronate + 2 NADH + 3 H(+). It functions in the pathway nucleotide-sugar biosynthesis; UDP-alpha-D-glucuronate biosynthesis; UDP-alpha-D-glucuronate from UDP-alpha-D-glucose: step 1/1. Its activity is regulated as follows. UDP-alpha-D-xylose (UDX) acts as a feedback inhibitor. It binds at the same site as the substrate, but functions as allosteric inhibitor by triggering a conformation change that disrupts the active hexameric ring structure and gives rise to an inactive, horseshoe-shaped hexamer. Functionally, catalyzes the formation of UDP-alpha-D-glucuronate, a constituent of complex glycosaminoglycans. Required for the biosynthesis of chondroitin sulfate and heparan sulfate. Required for embryonic development via its role in the biosynthesis of glycosaminoglycans. This is UDP-glucose 6-dehydrogenase (UGDH) from Gallus gallus (Chicken).